The primary structure comprises 297 residues: MNGKLQSSDVKNETPYNIPLLINENVISSGISLISLWHTYADEHYRVIWPRDKKKPLIANSWVAVYTVQGCGKILLKNGEQITLHGNCIIFLKPMDIHSYHCEGLVWEQYWMEFTPTSMMDIPVGQQSVIYNGEIYNQELTEVAELITSPEAIKNNLAVAFLTKIIYQWICLMYADGKKDPQRRQIEKLIATLHASLQQRWSVADMAATIPCSEAWLRRLFLRYTGKTPKEYYLDARLDLALSLLKQQGNSVGEVADTLNFFDSFHFSKAFKHKFGYAPSAVLKNTDQHPTDASPHN.

The 99-residue stretch at 187–285 folds into the HTH araC/xylS-type domain; the sequence is EKLIATLHAS…GYAPSAVLKN (99 aa). 2 DNA-binding regions (H-T-H motif) span residues 204-225 and 252-275; these read ADMAATIPCSEAWLRRLFLRYT and VGEVADTLNFFDSFHFSKAFKHKF.

This is an uncharacterized protein from Escherichia coli (strain K12).